We begin with the raw amino-acid sequence, 89 residues long: Large ribosomal subunit protein bL27 (89 aa).

The segment at 1–21 (MAHKKAGGSSRNGRDSKGKRL) is disordered.

It belongs to the bacterial ribosomal protein bL27 family.

The chain is Large ribosomal subunit protein bL27 from Bradyrhizobium sp. (strain ORS 278).